A 368-amino-acid polypeptide reads, in one-letter code: GDP-fucose transporter 1 (368 aa).

The next 9 helical transmembrane spans lie at Leu64–Leu84, Leu98–Ile118, Val141–Tyr161, Phe166–Leu186, Thr195–Phe215, Trp217–Val237, Leu251–Gly271, Phe287–Met307, and Ala332–Ile352.

The protein belongs to the TPT transporter family. SLC35C subfamily.

The protein localises to the golgi apparatus membrane. It carries out the reaction GMP(out) + GDP-beta-L-fucose(in) = GMP(in) + GDP-beta-L-fucose(out). In terms of biological role, antiporter specific for GDP-l-fucose and depending on the concomitant reverse transport of GMP. Involved in GDP-fucose import from the cytoplasm into the Golgi lumen. The sequence is that of GDP-fucose transporter 1 (slc35c1) from Dictyostelium discoideum (Social amoeba).